Reading from the N-terminus, the 140-residue chain is 6,7-dimethyl-8-ribityllumazine synthase (140 aa).

Residues phenylalanine 11, 42-44 (ALE), and 66-68 (VVI) each bind 5-amino-6-(D-ribitylamino)uracil. (2S)-2-hydroxy-3-oxobutyl phosphate is bound at residue 71–72 (ET). Catalysis depends on histidine 74, which acts as the Proton donor. Asparagine 98 lines the 5-amino-6-(D-ribitylamino)uracil pocket. Arginine 112 is a (2S)-2-hydroxy-3-oxobutyl phosphate binding site.

Belongs to the DMRL synthase family.

The catalysed reaction is (2S)-2-hydroxy-3-oxobutyl phosphate + 5-amino-6-(D-ribitylamino)uracil = 6,7-dimethyl-8-(1-D-ribityl)lumazine + phosphate + 2 H2O + H(+). Its pathway is cofactor biosynthesis; riboflavin biosynthesis; riboflavin from 2-hydroxy-3-oxobutyl phosphate and 5-amino-6-(D-ribitylamino)uracil: step 1/2. Its function is as follows. Catalyzes the formation of 6,7-dimethyl-8-ribityllumazine by condensation of 5-amino-6-(D-ribitylamino)uracil with 3,4-dihydroxy-2-butanone 4-phosphate. This is the penultimate step in the biosynthesis of riboflavin. This chain is 6,7-dimethyl-8-ribityllumazine synthase, found in Erythrobacter litoralis (strain HTCC2594).